A 456-amino-acid chain; its full sequence is Phosphomannomutase (456 aa).

Ser-98 serves as the catalytic Phosphoserine intermediate. Residues Ser-98, Asp-245, Asp-247, and Asp-249 each contribute to the Mg(2+) site.

Belongs to the phosphohexose mutase family. The cofactor is Mg(2+).

It carries out the reaction alpha-D-mannose 1-phosphate = D-mannose 6-phosphate. The protein operates within nucleotide-sugar biosynthesis; GDP-alpha-D-mannose biosynthesis; alpha-D-mannose 1-phosphate from D-fructose 6-phosphate: step 2/2. Functionally, involved in the biosynthesis of the capsular polysaccharide colanic acid. This chain is Phosphomannomutase (manB), found in Escherichia coli (strain K12).